Consider the following 224-residue polypeptide: ATP-dependent dethiobiotin synthetase BioD (224 aa).

13–18 (NVGKTI) lines the ATP pocket. Thr17 contacts Mg(2+). The active site involves Lys38. Ser42 contributes to the substrate binding site. Residues Asp55, 116-119 (EGAG), 176-177 (NN), and Asn211 contribute to the ATP site. Asp55 and Glu116 together coordinate Mg(2+).

The protein belongs to the dethiobiotin synthetase family. As to quaternary structure, homodimer. Requires Mg(2+) as cofactor.

Its subcellular location is the cytoplasm. The catalysed reaction is (7R,8S)-7,8-diammoniononanoate + CO2 + ATP = (4R,5S)-dethiobiotin + ADP + phosphate + 3 H(+). It functions in the pathway cofactor biosynthesis; biotin biosynthesis; biotin from 7,8-diaminononanoate: step 1/2. Functionally, catalyzes a mechanistically unusual reaction, the ATP-dependent insertion of CO2 between the N7 and N8 nitrogen atoms of 7,8-diaminopelargonic acid (DAPA, also called 7,8-diammoniononanoate) to form a ureido ring. The sequence is that of ATP-dependent dethiobiotin synthetase BioD from Buchnera aphidicola subsp. Acyrthosiphon pisum (strain APS) (Acyrthosiphon pisum symbiotic bacterium).